A 291-amino-acid chain; its full sequence is Signal peptidase I (291 aa).

Residues 1 to 45 (MTMKKLTSTTTTLWDNKLFINNLKNFMQTNTESNNNKTTAQEWKS) lie on the Cytoplasmic side of the membrane. Residues 46–66 (FILVVVIALMIRILIIESFVV) traverse the membrane as a helical segment. Over 67–291 (PTGSMKATIL…IFRNLYSIED (225 aa)) the chain is Periplasmic. Residues S70 and K133 contribute to the active site.

Belongs to the peptidase S26 family.

It is found in the cell inner membrane. It catalyses the reaction Cleavage of hydrophobic, N-terminal signal or leader sequences from secreted and periplasmic proteins.. This chain is Signal peptidase I (lepB), found in Rickettsia bellii (strain RML369-C).